A 254-amino-acid polypeptide reads, in one-letter code: Type III pantothenate kinase (254 aa).

6–13 (DVGNTNTT) provides a ligand contact to ATP. Residues tyrosine 100 and 107-110 (GADR) each bind substrate. Catalysis depends on aspartate 109, which acts as the Proton acceptor. Position 129 (aspartate 129) interacts with K(+). Threonine 132 provides a ligand contact to ATP. Substrate is bound at residue threonine 184.

The protein belongs to the type III pantothenate kinase family. In terms of assembly, homodimer. NH4(+) is required as a cofactor. It depends on K(+) as a cofactor.

The protein resides in the cytoplasm. It catalyses the reaction (R)-pantothenate + ATP = (R)-4'-phosphopantothenate + ADP + H(+). Its pathway is cofactor biosynthesis; coenzyme A biosynthesis; CoA from (R)-pantothenate: step 1/5. Catalyzes the phosphorylation of pantothenate (Pan), the first step in CoA biosynthesis. The polypeptide is Type III pantothenate kinase (Anaeromyxobacter dehalogenans (strain 2CP-1 / ATCC BAA-258)).